The following is a 182-amino-acid chain: Glutamyl-tRNA(Gln) amidotransferase subunit F, mitochondrial (182 aa).

Belongs to the GatF family. In terms of assembly, subunit of the heterotrimeric GatFAB amidotransferase (AdT) complex, composed of A, B and F subunits.

It localises to the mitochondrion inner membrane. It catalyses the reaction L-glutamyl-tRNA(Gln) + L-glutamine + ATP + H2O = L-glutaminyl-tRNA(Gln) + L-glutamate + ADP + phosphate + H(+). In terms of biological role, allows the formation of correctly charged Gln-tRNA(Gln) through the transamidation of misacylated Glu-tRNA(Gln) in the mitochondria. The reaction takes place in the presence of glutamine and ATP through an activated gamma-phospho-Glu-tRNA(Gln). Required for proper protein synthesis within the mitochondrion. This chain is Glutamyl-tRNA(Gln) amidotransferase subunit F, mitochondrial, found in Candida tropicalis (strain ATCC MYA-3404 / T1) (Yeast).